Reading from the N-terminus, the 341-residue chain is Type II restriction enzyme BgcI specificity subunit S.BcgI (341 aa).

It belongs to the type-I restriction system S methylase family. Heterotrimer of two A and one B subunit. Both subunits are necessary for DNA-binding, which is sequence non-specific. Mg(2+) is required as a cofactor.

It carries out the reaction Endonucleolytic cleavage of DNA to give specific double-stranded fragments with terminal 5'-phosphates.. Its activity is regulated as follows. DNA restriction requires S-adenosyl-L-methionine and Mg(2+), and is inhibited by S-adenosyl-homocysteine. SAM may be a cofactor for DNA restriction. Its function is as follows. The specificity subunit. A B, G, H and S subtype restriction enzyme that recognizes the double-stranded sequence 5'-CGAN(6)TGC-3' and cleaves bilaterally and symmetrically 10 base pairs upstream and 12 base pairs downstream of the sequence to release a 34-base pair fragment. Methylation of the recognition sequence occurs on the adenine in either one or both strands; seems to methylate restricted DNA. This subunit degrades DNA in a non-specific manner. In Heyndrickxia coagulans (Weizmannia coagulans), this protein is Type II restriction enzyme BgcI specificity subunit S.BcgI.